The chain runs to 495 residues: Keratin, type II cytoskeletal 74 (495 aa).

Positions 1–105 are head; it reads MASCHTAGHR…DPEIQKVRAQ (105 aa). Positions 106-141 are coil 1A; that stretch reads EREQIKALNDKFASFIDKVRFLEQQNQVLQTKWELL. In terms of domain architecture, IF rod spans 106-419; that stretch reads EREQIKALND…KLLEGEENRM (314 aa). A linker 1 region spans residues 142–160; it reads QQLDLSNCRRNLEPVYEAH. The tract at residues 161–252 is coil 1B; it reads ISNLRKQLEM…CLYDEEISQL (92 aa). The tract at residues 253-276 is linker 12; the sequence is QTHASETSVILSMDNNRDLDLAGI. The interval 277–415 is coil 2; that stretch reads IAEVRAHYED…ATYRKLLEGE (139 aa). Positions 416–495 are tail; the sequence is ENRMSGENPS…AAGTLARKTT (80 aa). Residues 449–495 are disordered; that stretch reads DSEAGNAVGSPSTPRNSQSKTRGSSVDPRDAQDESAAAAGTLARKTT. A compositionally biased stretch (polar residues) spans 457-472; it reads GSPSTPRNSQSKTRGS.

The protein belongs to the intermediate filament family. Heterotetramer of two type I and two type II keratins. As to expression, expressed in epidermis with a particularly strong staining in the nail matrix, nail bed and hyponychium (at protein level).

Has a role in hair formation. Specific component of keratin intermediate filaments in the inner root sheath (IRS) of the hair follicle. This Mus musculus (Mouse) protein is Keratin, type II cytoskeletal 74.